We begin with the raw amino-acid sequence, 339 residues long: Isopentenyl-diphosphate delta-isomerase (339 aa).

Residue 7–8 coordinates substrate; the sequence is RK. FMN contacts are provided by residues S65, 66–68, S96, and N125; that span reads SMT. Substrate is bound at residue 96–98; sequence SQR. Q160 contacts substrate. A Mg(2+)-binding site is contributed by E161. FMN contacts are provided by residues K192, T222, and 293-294; that span reads AG.

It belongs to the IPP isomerase type 2 family. Homooctamer. Dimer of tetramers. Requires FMN as cofactor. The cofactor is NADPH. It depends on Mg(2+) as a cofactor.

It is found in the cytoplasm. The enzyme catalyses isopentenyl diphosphate = dimethylallyl diphosphate. Its function is as follows. Involved in the biosynthesis of isoprenoids. Catalyzes the 1,3-allylic rearrangement of the homoallylic substrate isopentenyl (IPP) to its allylic isomer, dimethylallyl diphosphate (DMAPP). This Vibrio parahaemolyticus serotype O3:K6 (strain RIMD 2210633) protein is Isopentenyl-diphosphate delta-isomerase.